We begin with the raw amino-acid sequence, 360 residues long: Magnesium transporter NIPA2 (360 aa).

Over 1–9 (MSQGRGKYD) the chain is Extracellular. Residues 10–30 (FYIGLGLAMSSSIFIGGSFIL) form a helical membrane-spanning segment. Residues 31 to 56 (KKKGLLRLARKGSMRAGQGGHAYLKE) lie on the Cytoplasmic side of the membrane. The chain crosses the membrane as a helical span at residues 57 to 77 (WLWWAGLLSMGAGEVANFAAY). A78 is a topological domain (extracellular). Residues 79-99 (FAPATLVTPLGALSVLVSAIL) form a helical membrane-spanning segment. Residues 100-107 (SSYFLNER) are Cytoplasmic-facing. The chain crosses the membrane as a helical span at residues 108–128 (LNLHGKIGCLLSILGSTVMVI). The Extracellular segment spans residues 129 to 149 (HAPKEEEIETLNEMSHKLGDP). The helical transmembrane segment at 150–170 (GFVVFATLVVIVALILIFVVG) threads the bilayer. The Cytoplasmic segment spans residues 171 to 175 (PRHGQ). The chain crosses the membrane as a helical span at residues 176–196 (TNILVYITICSVIGAFSVSCV). The Extracellular segment spans residues 197-215 (KGLGIAIKELFAGKPVLRH). The chain crosses the membrane as a helical span at residues 216–236 (PLAWILLLSLIVCVSTQINYL). Residues 237-246 (NRALDIFNTS) lie on the Cytoplasmic side of the membrane. Residues 247–267 (IVTPIYYVFFTTSVLTCSAIL) form a helical membrane-spanning segment. The Extracellular segment spans residues 268 to 278 (FKEWQDMPVDD). The helical transmembrane segment at 279–299 (VIGTLSGFFTIIVGIFLLHAF) threads the bilayer. The Cytoplasmic portion of the chain corresponds to 300–360 (KDVSFSLASL…SRRNGNLTAF (61 aa)).

This sequence belongs to the NIPA family. Widely expressed.

It is found in the cell membrane. It localises to the early endosome. The enzyme catalyses Mg(2+)(in) = Mg(2+)(out). In terms of biological role, acts as a selective Mg(2+) transporter. The polypeptide is Magnesium transporter NIPA2 (NIPA2) (Homo sapiens (Human)).